We begin with the raw amino-acid sequence, 354 residues long: Cellular communication network factor 6 (354 aa).

Positions 1-23 (MQGLLFSTLLLAGLAQFCCRVQG) are cleaved as a signal peptide. Positions 44–117 (RKQFCHWPCK…RYETGVCAYL (74 aa)) constitute an IGFBP N-terminal domain. Cystine bridges form between Cys-48–Cys-72, Cys-52–Cys-74, Cys-54–Cys-75, Cys-61–Cys-78, Cys-86–Cys-100, and Cys-92–Cys-114. An N-linked (GlcNAc...) asparagine glycan is attached at Asn-178. Residues 208 to 253 (KCLVQATKWTPCSRTCGMGISNRVTNENSNCEMRKEKRLCYIQPCD) enclose the TSP type-1 domain. 5 cysteine pairs are disulfide-bonded: Cys-268–Cys-305, Cys-285–Cys-319, Cys-296–Cys-335, Cys-299–Cys-337, and Cys-304–Cys-341. Residues 268-342 (CQPTFQLSKA…TSCVCQRNCR (75 aa)) enclose the CTCK domain. An N-linked (GlcNAc...) asparagine glycan is attached at Asn-308.

It belongs to the CCN family. As to expression, predominant expression in adult kidney and testis and fetal kidney. Weaker expression found in placenta, ovary, prostate and small intestine. Also expressed in skeletally-derived cells such as synoviocytes and articular cartilage chondrocytes.

It localises to the secreted. It is found in the mitochondrion. In terms of biological role, plays a role in mitochondrial electron transport and mitochondrial respiration. Through its regulation of the mitochondrial function may play a role in normal postnatal skeletal growth and cartilage homeostasis. In Homo sapiens (Human), this protein is Cellular communication network factor 6.